The primary structure comprises 644 residues: uncharacterized protein (644 aa).

The tract at residues 65 to 117 (DSDVETTGGGGRGSTTSTEDRIDEHDDAIEDDGVSNEEDENQDAEQEQEVDLN) is disordered. A compositionally biased stretch (acidic residues) spans 89-114 (HDDAIEDDGVSNEEDENQDAEQEQEV).

This is an uncharacterized protein from Arabidopsis thaliana (Mouse-ear cress).